We begin with the raw amino-acid sequence, 174 residues long: FMN reductase (NADH) RutF (174 aa).

It belongs to the non-flavoprotein flavin reductase family. RutF subfamily.

It catalyses the reaction FMNH2 + NAD(+) = FMN + NADH + 2 H(+). Functionally, catalyzes the reduction of FMN to FMNH2 which is used to reduce pyrimidine by RutA via the Rut pathway. This is FMN reductase (NADH) RutF from Agrobacterium fabrum (strain C58 / ATCC 33970) (Agrobacterium tumefaciens (strain C58)).